The sequence spans 603 residues: Geraniol synthase, chloroplastic (603 aa).

A chloroplast-targeting transit peptide spans 1 to 50 (MALQMIAPFLSSFLPNPRHSLAAHGLTHQKCVSKHISCSTTTPTYSTTVP). The (2E)-geranyl diphosphate site is built by Arg301, Asp338, Asp342, Arg479, and Asp482. Mg(2+) contacts are provided by Asp338 and Asp342. The DDXXD motif motif lies at 338-342 (DDIYD). Residues Asp482, Thr486, and Glu490 each coordinate Mg(2+).

Belongs to the terpene synthase family. Tpsb subfamily. Homodimer. Mg(2+) serves as cofactor. The cofactor is Mn(2+). As to expression, expressed in the oil cells of the leaves.

Its subcellular location is the plastid. The protein resides in the chloroplast. It catalyses the reaction (2E)-geranyl diphosphate + H2O = (2E)-geraniol + diphosphate. The protein operates within secondary metabolite biosynthesis; terpenoid biosynthesis. Monoterpene synthase that catalyzes the formation of geraniol from geranyl diphosphate. The sequence is that of Geraniol synthase, chloroplastic (GerS) from Cinnamomum tenuipile (Alseodaphne mollis).